A 248-amino-acid chain; its full sequence is UPF0524 protein C3orf70 homolog (248 aa).

The segment at 169–248 is disordered; sequence KESDTPKLGH…EVIETMETTV (80 aa). A compositionally biased stretch (acidic residues) spans 200-227; the sequence is SCDEDTEEGAELSSEEDYSPESSWEPDE.

It belongs to the UPF0524 family.

May play a role in neuronal and neurobehavioral development. This Mus musculus (Mouse) protein is UPF0524 protein C3orf70 homolog.